The primary structure comprises 232 residues: GTP cyclohydrolase 1 (232 aa).

Residues methionine 1–serine 24 are disordered. Zn(2+) contacts are provided by cysteine 121, histidine 124, and cysteine 192.

It belongs to the GTP cyclohydrolase I family. Toroid-shaped homodecamer, composed of two pentamers of five dimers.

It carries out the reaction GTP + H2O = 7,8-dihydroneopterin 3'-triphosphate + formate + H(+). It participates in cofactor biosynthesis; 7,8-dihydroneopterin triphosphate biosynthesis; 7,8-dihydroneopterin triphosphate from GTP: step 1/1. In terms of biological role, first enzyme in the biosynthesis of tetrahydrobiopterin (BH4). Catalyzes the conversion of GTP into dihydroneopterin triphosphate (7,8-dihydroneopterin 3'-triphosphate), which is subsequently catalyzed by 6-pyruvoyltetrahydropterin synthase (ptsA) and sepiapterin reductase (sprA). This is GTP cyclohydrolase 1 (gchA) from Dictyostelium discoideum (Social amoeba).